A 701-amino-acid polypeptide reads, in one-letter code: Elongation factor G 2 (701 aa).

The tr-type G domain occupies 8–290; it reads NRYRNIGIVA…AVIEFLPAPA (283 aa). GTP is bound by residues 17-24, 88-92, and 142-145; these read AHVDAGKT, DTPGH, and NKMD.

It belongs to the TRAFAC class translation factor GTPase superfamily. Classic translation factor GTPase family. EF-G/EF-2 subfamily.

It localises to the cytoplasm. Its function is as follows. Catalyzes the GTP-dependent ribosomal translocation step during translation elongation. During this step, the ribosome changes from the pre-translocational (PRE) to the post-translocational (POST) state as the newly formed A-site-bound peptidyl-tRNA and P-site-bound deacylated tRNA move to the P and E sites, respectively. Catalyzes the coordinated movement of the two tRNA molecules, the mRNA and conformational changes in the ribosome. In Pseudoalteromonas atlantica (strain T6c / ATCC BAA-1087), this protein is Elongation factor G 2.